Here is a 449-residue protein sequence, read N- to C-terminus: Sensor protein QseC (449 aa).

The Cytoplasmic segment spans residues 1–12 (MKLTQRLSLRVR). Residues 13–33 (LTLIFLILVSITWAISSFVAW) form a helical membrane-spanning segment. Over 34-161 (RKTTDNVDEL…REDMALAIVA (128 aa)) the chain is Periplasmic. Residues 162 to 182 (AQLTPWLIALPFMLLILLLLL) traverse the membrane as a helical segment. Positions 183 to 235 (HRELRPLKKLAQALRFRSPESETPLDAKGVPSEVRPLVEALNQLFSRIHSMMV) constitute an HAMP domain. The Cytoplasmic segment spans residues 183–449 (HRELRPLKKL…EGGFEAVVSW (267 aa)). The region spanning 243–449 (DAAHELRSPL…EGGFEAVVSW (207 aa)) is the Histidine kinase domain. His-246 carries the post-translational modification Phosphohistidine; by autocatalysis.

It is found in the cell inner membrane. The enzyme catalyses ATP + protein L-histidine = ADP + protein N-phospho-L-histidine.. Functionally, member of a two-component regulatory system QseB/QseC. Activates the flagella regulon by activating transcription of FlhDC. May activate QseB by phosphorylation. The polypeptide is Sensor protein QseC (qseC) (Salmonella typhimurium (strain LT2 / SGSC1412 / ATCC 700720)).